We begin with the raw amino-acid sequence, 370 residues long: Actin-related protein 2/3 complex subunit 1A (370 aa).

WD repeat units follow at residues 6–45 (FLLE…WTKA), 50–89 (EHNG…WKPT), 140–179 (PIRS…VDEK), 202–241 (GTGG…QVST), 244–284 (TEFL…TFVS), and 322–365 (LHQN…SSIQ).

This sequence belongs to the WD repeat ARPC1 family. Probable component of the Arp2/3 complex in which it may replace ARPC1B.

Its subcellular location is the cytoplasm. The protein resides in the cytoskeleton. It localises to the nucleus. In terms of biological role, probably functions as a component of the Arp2/3 complex which is involved in regulation of actin polymerization and together with an activating nucleation-promoting factor (NPF) mediates the formation of branched actin networks. In addition to its role in the cytoplasmic cytoskeleton, the Arp2/3 complex also promotes actin polymerization in the nucleus, thereby regulating gene transcription and repair of damaged DNA. In Mus musculus (Mouse), this protein is Actin-related protein 2/3 complex subunit 1A (Arpc1a).